A 113-amino-acid chain; its full sequence is Small ribosomal subunit protein uS15 (113 aa).

The protein belongs to the universal ribosomal protein uS15 family. As to quaternary structure, part of the 30S ribosomal subunit. Forms a bridge to the 50S subunit in the 70S ribosome, contacting the 23S rRNA.

In terms of biological role, one of the primary rRNA binding proteins, it binds directly to 16S rRNA where it helps nucleate assembly of the platform of the 30S subunit by binding and bridging several RNA helices of the 16S rRNA. Forms an intersubunit bridge (bridge B4) with the 23S rRNA of the 50S subunit in the ribosome. This chain is Small ribosomal subunit protein uS15, found in Haemophilus influenzae (strain PittEE).